The following is a 359-amino-acid chain: Chorismate synthase (359 aa).

Arg-47 is an NADP(+) binding site. FMN is bound by residues 123–125 (RSS), Gly-283, 298–302 (KPTSS), and Arg-326.

The protein belongs to the chorismate synthase family. As to quaternary structure, homotetramer. FMNH2 serves as cofactor.

It catalyses the reaction 5-O-(1-carboxyvinyl)-3-phosphoshikimate = chorismate + phosphate. It functions in the pathway metabolic intermediate biosynthesis; chorismate biosynthesis; chorismate from D-erythrose 4-phosphate and phosphoenolpyruvate: step 7/7. In terms of biological role, catalyzes the anti-1,4-elimination of the C-3 phosphate and the C-6 proR hydrogen from 5-enolpyruvylshikimate-3-phosphate (EPSP) to yield chorismate, which is the branch point compound that serves as the starting substrate for the three terminal pathways of aromatic amino acid biosynthesis. This reaction introduces a second double bond into the aromatic ring system. The polypeptide is Chorismate synthase (Chlamydia abortus (strain DSM 27085 / S26/3) (Chlamydophila abortus)).